The chain runs to 259 residues: DNA adenine methylase (259 aa).

Residues Tyr-7, Lys-11, 32 to 37, Asp-50, 156 to 157, Asp-171, and Tyr-181 contribute to the S-adenosyl-L-methionine site; these read FCGGLS and HF.

Belongs to the N(4)/N(6)-methyltransferase family. As to quaternary structure, monomer.

The enzyme catalyses a 2'-deoxyadenosine in DNA + S-adenosyl-L-methionine = an N(6)-methyl-2'-deoxyadenosine in DNA + S-adenosyl-L-homocysteine + H(+). An alpha subtype methylase, recognizes the double-stranded sequence 5'-GATC-3' and methylates A-2. Also acts on 5-hydroxymethylcytosine (hmC)-containing DNA, the normal base in this virus. May prevent degradation of viral DNA by the host restriction-modification antiviral defense system. The protein is DNA adenine methylase of Enterobacteria phage T4 (Bacteriophage T4).